Here is a 759-residue protein sequence, read N- to C-terminus: Polyribonucleotide nucleotidyltransferase (759 aa).

Mg(2+) contacts are provided by D522 and D528. The region spanning 588–647 is the KH domain; sequence PRITTIKVPVDKIGEVIGPKGKMINSITEETGASISIEDDGTVFVGASNGEAAQAAIDKI. The S1 motif domain occupies 659–728; the sequence is GERFLGTVVK…NRGKISLVLV (70 aa). A disordered region spans residues 734 to 759; it reads AEASDNGSATPSDKAPATADATTAGN. Positions 741 to 759 are enriched in low complexity; sequence SATPSDKAPATADATTAGN.

This sequence belongs to the polyribonucleotide nucleotidyltransferase family. It depends on Mg(2+) as a cofactor.

Its subcellular location is the cytoplasm. The enzyme catalyses RNA(n+1) + phosphate = RNA(n) + a ribonucleoside 5'-diphosphate. Functionally, involved in mRNA degradation. Catalyzes the phosphorolysis of single-stranded polyribonucleotides processively in the 3'- to 5'-direction. This is Polyribonucleotide nucleotidyltransferase from Mycobacterium sp. (strain JLS).